Here is a 421-residue protein sequence, read N- to C-terminus: Gamma-glutamyl phosphate reductase (421 aa).

Belongs to the gamma-glutamyl phosphate reductase family.

Its subcellular location is the cytoplasm. It carries out the reaction L-glutamate 5-semialdehyde + phosphate + NADP(+) = L-glutamyl 5-phosphate + NADPH + H(+). The protein operates within amino-acid biosynthesis; L-proline biosynthesis; L-glutamate 5-semialdehyde from L-glutamate: step 2/2. Functionally, catalyzes the NADPH-dependent reduction of L-glutamate 5-phosphate into L-glutamate 5-semialdehyde and phosphate. The product spontaneously undergoes cyclization to form 1-pyrroline-5-carboxylate. This chain is Gamma-glutamyl phosphate reductase, found in Acinetobacter baumannii (strain AYE).